Reading from the N-terminus, the 917-residue chain is Protein translocase subunit SecA (917 aa).

ATP contacts are provided by residues Gln-87, Gly-105–Thr-109, and Asp-516. Residues Cys-901, Cys-903, Cys-912, and His-913 each contribute to the Zn(2+) site.

It belongs to the SecA family. As to quaternary structure, monomer and homodimer. Part of the essential Sec protein translocation apparatus which comprises SecA, SecYEG and auxiliary proteins SecDF-YajC and YidC. The cofactor is Zn(2+).

It localises to the cell inner membrane. The protein localises to the cytoplasm. The enzyme catalyses ATP + H2O + cellular proteinSide 1 = ADP + phosphate + cellular proteinSide 2.. Functionally, part of the Sec protein translocase complex. Interacts with the SecYEG preprotein conducting channel. Has a central role in coupling the hydrolysis of ATP to the transfer of proteins into and across the cell membrane, serving both as a receptor for the preprotein-SecB complex and as an ATP-driven molecular motor driving the stepwise translocation of polypeptide chains across the membrane. This is Protein translocase subunit SecA from Verminephrobacter eiseniae (strain EF01-2).